Consider the following 168-residue polypeptide: Large ribosomal subunit protein uL10 (168 aa).

Belongs to the universal ribosomal protein uL10 family. In terms of assembly, part of the ribosomal stalk of the 50S ribosomal subunit. The N-terminus interacts with L11 and the large rRNA to form the base of the stalk. The C-terminus forms an elongated spine to which L12 dimers bind in a sequential fashion forming a multimeric L10(L12)X complex.

Forms part of the ribosomal stalk, playing a central role in the interaction of the ribosome with GTP-bound translation factors. The polypeptide is Large ribosomal subunit protein uL10 (Lacticaseibacillus casei (strain BL23) (Lactobacillus casei)).